Here is a 227-residue protein sequence, read N- to C-terminus: Cytochrome c oxidase subunit 2 (227 aa).

Residues 1–14 lie on the Mitochondrial intermembrane side of the membrane; that stretch reads MAYPFQLGLQDATS. A helical transmembrane segment spans residues 15–45; the sequence is PIMEELTNFHDHTLMIVFLISSLVLYIISLM. At 46 to 59 the chain is on the mitochondrial matrix side; that stretch reads LTTKLTHTSTMDAQ. A helical transmembrane segment spans residues 60 to 87; sequence EVETIWTILPAAILVLIALPSLRILYMM. The Mitochondrial intermembrane portion of the chain corresponds to 88 to 227; the sequence is DEINNPVLTV…YFESWSASMI (140 aa). Residues histidine 161, cysteine 196, glutamate 198, cysteine 200, histidine 204, and methionine 207 each contribute to the Cu cation site. Mg(2+) is bound at residue glutamate 198. Tyrosine 218 is subject to Phosphotyrosine.

It belongs to the cytochrome c oxidase subunit 2 family. As to quaternary structure, component of the cytochrome c oxidase (complex IV, CIV), a multisubunit enzyme composed of 14 subunits. The complex is composed of a catalytic core of 3 subunits MT-CO1, MT-CO2 and MT-CO3, encoded in the mitochondrial DNA, and 11 supernumerary subunits COX4I, COX5A, COX5B, COX6A, COX6B, COX6C, COX7A, COX7B, COX7C, COX8 and NDUFA4, which are encoded in the nuclear genome. The complex exists as a monomer or a dimer and forms supercomplexes (SCs) in the inner mitochondrial membrane with NADH-ubiquinone oxidoreductase (complex I, CI) and ubiquinol-cytochrome c oxidoreductase (cytochrome b-c1 complex, complex III, CIII), resulting in different assemblies (supercomplex SCI(1)III(2)IV(1) and megacomplex MCI(2)III(2)IV(2)). Found in a complex with TMEM177, COA6, COX18, COX20, SCO1 and SCO2. Interacts with TMEM177 in a COX20-dependent manner. Interacts with COX20. Interacts with COX16. Requires Cu cation as cofactor.

It localises to the mitochondrion inner membrane. It carries out the reaction 4 Fe(II)-[cytochrome c] + O2 + 8 H(+)(in) = 4 Fe(III)-[cytochrome c] + 2 H2O + 4 H(+)(out). Component of the cytochrome c oxidase, the last enzyme in the mitochondrial electron transport chain which drives oxidative phosphorylation. The respiratory chain contains 3 multisubunit complexes succinate dehydrogenase (complex II, CII), ubiquinol-cytochrome c oxidoreductase (cytochrome b-c1 complex, complex III, CIII) and cytochrome c oxidase (complex IV, CIV), that cooperate to transfer electrons derived from NADH and succinate to molecular oxygen, creating an electrochemical gradient over the inner membrane that drives transmembrane transport and the ATP synthase. Cytochrome c oxidase is the component of the respiratory chain that catalyzes the reduction of oxygen to water. Electrons originating from reduced cytochrome c in the intermembrane space (IMS) are transferred via the dinuclear copper A center (CU(A)) of subunit 2 and heme A of subunit 1 to the active site in subunit 1, a binuclear center (BNC) formed by heme A3 and copper B (CU(B)). The BNC reduces molecular oxygen to 2 water molecules using 4 electrons from cytochrome c in the IMS and 4 protons from the mitochondrial matrix. This chain is Cytochrome c oxidase subunit 2 (MT-CO2), found in Conilurus penicillatus (Brush-tailed rabbit-rat).